The chain runs to 201 residues: 3-isopropylmalate dehydratase small subunit (201 aa).

Belongs to the LeuD family. LeuD type 1 subfamily. As to quaternary structure, heterodimer of LeuC and LeuD.

The catalysed reaction is (2R,3S)-3-isopropylmalate = (2S)-2-isopropylmalate. Its pathway is amino-acid biosynthesis; L-leucine biosynthesis; L-leucine from 3-methyl-2-oxobutanoate: step 2/4. Functionally, catalyzes the isomerization between 2-isopropylmalate and 3-isopropylmalate, via the formation of 2-isopropylmaleate. This chain is 3-isopropylmalate dehydratase small subunit, found in Shewanella baltica (strain OS223).